Consider the following 357-residue polypeptide: Protein-glutamate methylesterase/protein-glutamine glutaminase 1 (357 aa).

One can recognise a Response regulatory domain in the interval 10 to 127 (RTLIVDDSAF…DVNKIEKELV (118 aa)). Position 61 is a 4-aspartylphosphate (aspartate 61). One can recognise a CheB-type methylesterase domain in the interval 159 to 353 (SCAGDFAVLI…EEIVRMSEVK (195 aa)). Residues serine 171, histidine 198, and aspartate 295 contribute to the active site.

Belongs to the CheB family. Phosphorylated by CheA. Phosphorylation of the N-terminal regulatory domain activates the methylesterase activity.

The protein localises to the cytoplasm. The catalysed reaction is [protein]-L-glutamate 5-O-methyl ester + H2O = L-glutamyl-[protein] + methanol + H(+). It carries out the reaction L-glutaminyl-[protein] + H2O = L-glutamyl-[protein] + NH4(+). Functionally, involved in chemotaxis. Part of a chemotaxis signal transduction system that modulates chemotaxis in response to various stimuli. Catalyzes the demethylation of specific methylglutamate residues introduced into the chemoreceptors (methyl-accepting chemotaxis proteins or MCP) by CheR. Also mediates the irreversible deamidation of specific glutamine residues to glutamic acid. This chain is Protein-glutamate methylesterase/protein-glutamine glutaminase 1, found in Methanosarcina mazei (strain ATCC BAA-159 / DSM 3647 / Goe1 / Go1 / JCM 11833 / OCM 88) (Methanosarcina frisia).